The sequence spans 292 residues: Probable endonuclease LCL3 (292 aa).

Residues 41–58 form a helical membrane-spanning segment; sequence YFSVAAFAAGSLSLAASY. Positions 83-247 constitute a TNase-like domain; it reads RWIKGRVTSV…KDARRGIWAK (165 aa). Arginine 132 is an active-site residue. Aspartate 137 provides a ligand contact to Ca(2+). Active-site residues include glutamate 140 and arginine 180. The tract at residues 256 to 282 is disordered; the sequence is EYKRRYAQAADGGEPPSKARAEKEQKR. A compositionally biased stretch (basic and acidic residues) spans 272–282; the sequence is SKARAEKEQKR.

It belongs to the LCL3 family.

It localises to the mitochondrion. Its subcellular location is the membrane. The chain is Probable endonuclease LCL3 (LCL3) from Schizophyllum commune (strain H4-8 / FGSC 9210) (Split gill fungus).